Consider the following 145-residue polypeptide: Photosystem I reaction center subunit VI-2, chloroplastic (145 aa).

Residues 1–50 (MASFATIAAVQPSAAVKGLGGSSLAGAKLFIKPSRQSFKTKSTRAGAVVA) constitute a chloroplast transit peptide. Residues 102–118 (LLLKFLILGGGSLLTYV) form a helical membrane-spanning segment. The interval 126 to 145 (VLPIKRGPQEPPKLGPRGKL) is disordered.

It belongs to the psaH family.

It is found in the plastid. Its subcellular location is the chloroplast thylakoid membrane. Its function is as follows. Possible role could be the docking of the LHC I antenna complex to the core complex. In Arabidopsis thaliana (Mouse-ear cress), this protein is Photosystem I reaction center subunit VI-2, chloroplastic (PSAH2).